A 511-amino-acid polypeptide reads, in one-letter code: 3-octaprenyl-4-hydroxybenzoate carboxy-lyase (511 aa).

Residue Asn176 coordinates Mn(2+). Prenylated FMN contacts are provided by residues 179–181 (IYR), 193–195 (RWL), and 198–199 (RG). Residue Glu242 coordinates Mn(2+). Asp311 functions as the Proton donor in the catalytic mechanism.

It belongs to the UbiD family. Homohexamer. Prenylated FMN serves as cofactor. The cofactor is Mn(2+).

It localises to the cell membrane. The catalysed reaction is a 4-hydroxy-3-(all-trans-polyprenyl)benzoate + H(+) = a 2-(all-trans-polyprenyl)phenol + CO2. It functions in the pathway cofactor biosynthesis; ubiquinone biosynthesis. In terms of biological role, catalyzes the decarboxylation of 3-octaprenyl-4-hydroxy benzoate to 2-octaprenylphenol, an intermediate step in ubiquinone biosynthesis. In Laribacter hongkongensis (strain HLHK9), this protein is 3-octaprenyl-4-hydroxybenzoate carboxy-lyase.